The primary structure comprises 777 residues: Double zinc ribbon and ankyrin repeat-containing protein 1 (777 aa).

The segment covering 161 to 176 (QVGERTDPKTLKDLRF) has biased composition (basic and acidic residues). The segment at 161–202 (QVGERTDPKTLKDLRFSESPLEIPAHSGGSGSRPPTRQSQSP) is disordered. Over residues 193–202 (RPPTRQSQSP) the composition is skewed to polar residues. At S201 the chain carries Phosphoserine. DZANK-type zinc fingers lie at residues 230-289 (CAHC…CVVC) and 358-406 (CSRC…GSCG). ANK repeat units follow at residues 442–473 (NIPLPRSDAGTKRDIGTQTVGLFYPSGKLLAK) and 477–506 (EIASQKQRQEKMSDHKPLLTAISPGRGYWR).

In terms of assembly, interacts with NINL. Associates with DYNC1H1 and multiple dynein intermediate and light chains as well as actin-binding proteins.

The protein resides in the cytoplasm. It is found in the cytoskeleton. The protein localises to the microtubule organizing center. Its subcellular location is the centrosome. It localises to the cilium basal body. Functionally, involved in vesicle transport in photoreceptor cells. This Macaca fascicularis (Crab-eating macaque) protein is Double zinc ribbon and ankyrin repeat-containing protein 1 (DZANK1).